We begin with the raw amino-acid sequence, 270 residues long: Structure-specific endonuclease subunit SLX1 (270 aa).

One can recognise a GIY-YIG domain in the interval 9 to 94 (RFFGVYLLYC…PQASRRLTHV (86 aa)). The SLX1-type zinc-finger motif lies at 182–234 (CSLCARLLQDEEGPLCCPHPGCPLRAHIICLAEEFLQEEPGQLLPLEGHCPSC).

Belongs to the SLX1 family. In terms of assembly, forms a heterodimer with SLX4. It depends on a divalent metal cation as a cofactor. In terms of tissue distribution, expressed in testis, colon, bone marrow, brain, thymus and to a lesser extent in heart, kidney, skeletal muscle and spleen.

The protein resides in the nucleus. Its function is as follows. Catalytic subunit of the SLX1-SLX4 structure-specific endonuclease that resolves DNA secondary structures generated during DNA repair and recombination. Has endonuclease activity towards branched DNA substrates, introducing single-strand cuts in duplex DNA close to junctions with ss-DNA. Has a preference for 5'-flap structures, and promotes symmetrical cleavage of static and migrating Holliday junctions (HJs). Resolves HJs by generating two pairs of ligatable, nicked duplex products. This is Structure-specific endonuclease subunit SLX1 (Slx1b) from Mus musculus (Mouse).